The following is a 160-amino-acid chain: Transcription elongation factor GreA (160 aa).

Residues 10–37 adopt a coiled-coil conformation; the sequence is TLDGKAKLENELQELKTVKRKEVVERIK.

The protein belongs to the GreA/GreB family.

Functionally, necessary for efficient RNA polymerase transcription elongation past template-encoded arresting sites. The arresting sites in DNA have the property of trapping a certain fraction of elongating RNA polymerases that pass through, resulting in locked ternary complexes. Cleavage of the nascent transcript by cleavage factors such as GreA or GreB allows the resumption of elongation from the new 3'terminus. GreA releases sequences of 2 to 3 nucleotides. This Listeria innocua serovar 6a (strain ATCC BAA-680 / CLIP 11262) protein is Transcription elongation factor GreA.